We begin with the raw amino-acid sequence, 91 residues long: Alpha-defensin-related sequence 12 (91 aa).

Positions 1 to 19 are cleaved as a signal peptide; that stretch reads MKKLVLLSAFVLLAFQVQA. Positions 20-65 are excised as a propeptide; the sequence is DSIQNTDEEIKTEEQPGEENQAVSISFGDPEGYALQDAAIRRARRC. Repeat copies occupy residues 65 to 67, 68 to 70, 71 to 73, 74 to 76, 77 to 79, and 83 to 85. The tract at residues 65–88 is 6 X 3 AA tandem repeats of C-P-X; it reads CPPCPSCLSCPWCPRCLRCPMCKC.

This sequence belongs to the alpha-defensin family. In terms of tissue distribution, paneth cells of the small bowel.

Its subcellular location is the secreted. Its function is as follows. Apparent precursor of a secreted, cationic, proline- and cysteine-rich peptide that contains Cys-Pro-Xaa repeats. Unlike cryptdin, the proposed mature peptide region lacks the structural motif characteristic of defensins. It may have microbicidal activities. The protein is Alpha-defensin-related sequence 12 (Defa-rs12) of Mus musculus (Mouse).